Reading from the N-terminus, the 278-residue chain is Putative phosphoenolpyruvate synthase regulatory protein (278 aa).

158-165 (GVSRSGKT) serves as a coordination point for ADP.

This sequence belongs to the pyruvate, phosphate/water dikinase regulatory protein family. PSRP subfamily.

It catalyses the reaction [pyruvate, water dikinase] + ADP = [pyruvate, water dikinase]-phosphate + AMP + H(+). The catalysed reaction is [pyruvate, water dikinase]-phosphate + phosphate + H(+) = [pyruvate, water dikinase] + diphosphate. In terms of biological role, bifunctional serine/threonine kinase and phosphorylase involved in the regulation of the phosphoenolpyruvate synthase (PEPS) by catalyzing its phosphorylation/dephosphorylation. This chain is Putative phosphoenolpyruvate synthase regulatory protein, found in Acinetobacter baumannii (strain AYE).